The sequence spans 101 residues: Small ribosomal subunit protein uS14 (101 aa).

The protein belongs to the universal ribosomal protein uS14 family. Part of the 30S ribosomal subunit. Contacts proteins S3 and S10.

Binds 16S rRNA, required for the assembly of 30S particles and may also be responsible for determining the conformation of the 16S rRNA at the A site. The polypeptide is Small ribosomal subunit protein uS14 (Leifsonia xyli subsp. xyli (strain CTCB07)).